Consider the following 104-residue polypeptide: Large ribosomal subunit protein uL24 (104 aa).

It belongs to the universal ribosomal protein uL24 family. As to quaternary structure, part of the 50S ribosomal subunit.

One of two assembly initiator proteins, it binds directly to the 5'-end of the 23S rRNA, where it nucleates assembly of the 50S subunit. Its function is as follows. One of the proteins that surrounds the polypeptide exit tunnel on the outside of the subunit. In Clostridium beijerinckii (strain ATCC 51743 / NCIMB 8052) (Clostridium acetobutylicum), this protein is Large ribosomal subunit protein uL24.